Here is a 306-residue protein sequence, read N- to C-terminus: WUSCHEL-related homeobox 13 (306 aa).

A compositionally biased stretch (pro residues) spans 1–11; the sequence is MMALGVPPPPS. Disordered stretches follow at residues 1 to 20, 103 to 142, and 190 to 276; these read MMALGVPPPPSRAYVSGPLR, PRSHGHRTGGGGFSLKSSPFSSVGEERVPDPKPRRNPRPE, and SRSK…ARAT. The segment covering 126-142 has biased composition (basic and acidic residues); that stretch reads GEERVPDPKPRRNPRPE. Positions 132–196 form a DNA-binding region, homeobox; WUS-type; the sequence is DPKPRRNPRP…NRKSRSKNKL (65 aa). Gly residues predominate over residues 199–210; it reads GGTGRAGLGLGG. The span at 231–242 shows a compositional bias: pro residues; sequence FTPPPILPPQPV. The segment covering 243-270 has biased composition (low complexity); sequence QPQQQLVSPVAAPTSLSSSSSDRSSGSS.

It belongs to the WUS homeobox family.

It localises to the nucleus. Functionally, transcription factor which may be involved in developmental processes. This chain is WUSCHEL-related homeobox 13 (WOX13), found in Oryza sativa subsp. japonica (Rice).